The sequence spans 334 residues: Ephrin-B1 (334 aa).

A signal peptide spans 1 to 25 (MARPRGGRWLLGVLLALCRLAAPLA). An Ephrin RBD domain is found at 26–160 (KSLEPVSWSA…TRSMKIVMKV (135 aa)). Over 26 to 231 (KSLEPVSWSA…FLSSKVAVFA (206 aa)) the chain is Extracellular. 2 cysteine pairs are disulfide-bonded: C60–C97 and C85–C149. A glycan (N-linked (GlcNAc...) asparagine) is linked at N135. The tract at residues 175–218 (SRPSKEADNTVKIVTQSPRHKVPTVEEPGKPGSVNQNGQETQGP) is disordered. A compositionally biased stretch (polar residues) spans 207–218 (SVNQNGQETQGP). A helical transmembrane segment spans residues 232-252 (AIGAGCVIFILIIIFLVVLLI). Residues 253–334 (KIRKRHRKHT…QSPANIYYKV (82 aa)) lie on the Cytoplasmic side of the membrane. The short motif at 332 to 334 (YKV) is the PDZ-binding element.

This sequence belongs to the ephrin family. In terms of assembly, binds to the receptor tyrosine kinase EPHB2. Interacts with GRIP1 and GRIP2. In terms of processing, inducible phosphorylation of tyrosine residues in the cytoplasmic domain.

The protein resides in the membrane. In terms of biological role, cell surface transmembrane ligand for Eph receptors, a family of receptor tyrosine kinases which are crucial for migration, repulsion and adhesion during neuronal, vascular and epithelial development. Binds promiscuously Eph receptors residing on adjacent cells, leading to contact-dependent bidirectional signaling into neighboring cells. The signaling pathway downstream of the receptor is referred to as forward signaling while the signaling pathway downstream of the ephrin ligand is referred to as reverse signaling. The polypeptide is Ephrin-B1 (EFNB1) (Gallus gallus (Chicken)).